Consider the following 317-residue polypeptide: Porphobilinogen deaminase (317 aa).

Residue cysteine 245 is modified to S-(dipyrrolylmethanemethyl)cysteine.

Belongs to the HMBS family. As to quaternary structure, monomer. It depends on dipyrromethane as a cofactor.

It catalyses the reaction 4 porphobilinogen + H2O = hydroxymethylbilane + 4 NH4(+). It functions in the pathway porphyrin-containing compound metabolism; protoporphyrin-IX biosynthesis; coproporphyrinogen-III from 5-aminolevulinate: step 2/4. The protein operates within porphyrin-containing compound metabolism; chlorophyll biosynthesis. Its function is as follows. Tetrapolymerization of the monopyrrole PBG into the hydroxymethylbilane pre-uroporphyrinogen in several discrete steps. The chain is Porphobilinogen deaminase from Prochlorococcus marinus (strain MIT 9313).